A 620-amino-acid chain; its full sequence is Long-chain fatty acid transport protein 2 (620 aa).

Topologically, residues 1–4 (MLSA) are lumenal. The helical transmembrane segment at 5–27 (IYTVLAGLLFLPLLVNLCCPYFF) threads the bilayer. The Cytoplasmic portion of the chain corresponds to 28-106 (QDIGYFLKVA…DHLGLRQGDC (79 aa)). Residues 107 to 127 (VALLMGNEPAYVWLWLGLVKL) form a helical membrane-spanning segment. Over 128-261 (GCAMACLNYN…SGLKADDVIY (134 aa)) the chain is Lumenal. 222 to 233 (YIYTSGTTGLPK) serves as a coordination point for AMP. Residues 262 to 282 (ITLPFYHSAALLIGIHGCIVA) form a helical membrane-spanning segment. At 283 to 620 (GATLALRTKF…NAISAKTLKL (338 aa)) the chain is on the cytoplasmic side. N6-acetyllysine is present on lysine 291. Threonine 577 carries the phosphothreonine modification.

This sequence belongs to the ATP-dependent AMP-binding enzyme family. In terms of tissue distribution, expressed in liver, kidney, placenta, intestine, brain, heart, and colon. Predominantly expressed in liver. Expressed in liver, placenta, and intestine, but much lower relative to isoform 1.

It localises to the endoplasmic reticulum membrane. The protein resides in the peroxisome membrane. Its subcellular location is the cell membrane. It is found in the microsome. The enzyme catalyses a fatty acid(in) = a fatty acid(out). It carries out the reaction (9Z)-octadecenoate(out) = (9Z)-octadecenoate(in). The catalysed reaction is a long-chain fatty acid + ATP + CoA = a long-chain fatty acyl-CoA + AMP + diphosphate. It catalyses the reaction (5Z,8Z,11Z,14Z)-eicosatetraenoate + ATP + CoA = (5Z,8Z,11Z,14Z)-eicosatetraenoyl-CoA + AMP + diphosphate. The enzyme catalyses hexadecanoate + ATP + CoA = hexadecanoyl-CoA + AMP + diphosphate. It carries out the reaction (9Z)-octadecenoate + ATP + CoA = (9Z)-octadecenoyl-CoA + AMP + diphosphate. The catalysed reaction is 3,7,11,15-tetramethylhexadecanoate + ATP + CoA = phytanoyl-CoA + AMP + diphosphate. It catalyses the reaction (9Z,12Z,15Z)-octadecatrienoate + ATP + CoA = (9Z,12Z,15Z)-octadecatrienoyl-CoA + AMP + diphosphate. The enzyme catalyses 2,6,10,14-tetramethylpentadecanoate + ATP + CoA = pristanoyl-CoA + AMP + diphosphate. It carries out the reaction (E)-hexadec-2-enoate + ATP + CoA = (2E)-hexadecenoyl-CoA + AMP + diphosphate. The catalysed reaction is a very long-chain fatty acid + ATP + CoA = a very long-chain fatty acyl-CoA + AMP + diphosphate. It catalyses the reaction tetracosanoate + ATP + CoA = tetracosanoyl-CoA + AMP + diphosphate. The enzyme catalyses (4Z,7Z,10Z,13Z,16Z,19Z)-docosahexaenoate + ATP + CoA = (4Z,7Z,10Z,13Z,16Z,19Z)-docosahexaenoyl-CoA + AMP + diphosphate. It carries out the reaction (25R)-3alpha,7alpha,12alpha-trihydroxy-5beta-cholestan-26-oate + ATP + CoA = (25R)-3alpha,7alpha,12alpha-trihydroxy-5beta-cholestan-26-oyl-CoA + AMP + diphosphate. Functionally, mediates the import of long-chain fatty acids (LCFA) into the cell by facilitating their transport across cell membranes, playing an important role in hepatic fatty acid uptake. Also functions as an acyl-CoA ligase catalyzing the ATP-dependent formation of fatty acyl-CoA using LCFA and very-long-chain fatty acids (VLCFA) as substrates, which prevents fatty acid efflux from cells and might drive more fatty acid uptake. Plays a pivotal role in regulating available LCFA substrates from exogenous sources in tissues undergoing high levels of beta-oxidation or triglyceride synthesis. Can also activate branched-chain fatty acids such as phytanic acid and pristanic acid. May contribute to the synthesis of sphingosine-1-phosphate. Does not activate C24 bile acids, cholate and chenodeoxycholate. In vitro, activates 3-alpha,7-alpha,12-alpha-trihydroxy-5-beta-cholestanate (THCA), the C27 precursor of cholic acid deriving from the de novo synthesis from cholesterol. However, it is not critical for THCA activation and bile synthesis in vivo. Its function is as follows. Exhibits both long-chain fatty acids (LCFA) transport activity and acyl CoA synthetase towards very long-chain fatty acids. Shows a preference for generating CoA derivatives of n-3 fatty acids, which are preferentially trafficked into phosphatidylinositol. Exhibits long-chain fatty acids (LCFA) transport activity but lacks acyl CoA synthetase towards very long-chain fatty acids. The polypeptide is Long-chain fatty acid transport protein 2 (SLC27A2) (Homo sapiens (Human)).